We begin with the raw amino-acid sequence, 339 residues long: Cathepsin B (339 aa).

Residues 1 to 17 (MWQLWASLCCLLVLANA) form the signal peptide. Residues 18–79 (RSRPSFHPLS…QRVMFTEDLK (62 aa)) constitute a propeptide, activation peptide. 6 disulfide bridges follow: cysteine 93–cysteine 122, cysteine 105–cysteine 150, cysteine 141–cysteine 207, cysteine 142–cysteine 146, cysteine 179–cysteine 211, and cysteine 187–cysteine 198. Cysteine 108 is a catalytic residue. Asparagine 192 carries an N-linked (GlcNAc...) asparagine glycan. Lysine 220 carries the N6-acetyllysine modification. Residues histidine 278 and asparagine 298 contribute to the active site. Positions 334–339 (QYWEKI) are excised as a propeptide.

The protein belongs to the peptidase C1 family. In terms of assembly, dimer of a heavy chain and a light chain cross-linked by a disulfide bond. Interacts with SRPX2. Directly interacts with SHKBP1. As to expression, expressed in the stratum spinosum of the epidermis. Weak expression is detected in the stratum granulosum.

It is found in the lysosome. The protein resides in the melanosome. The protein localises to the secreted. Its subcellular location is the extracellular space. It localises to the apical cell membrane. It carries out the reaction Hydrolysis of proteins with broad specificity for peptide bonds. Preferentially cleaves -Arg-Arg-|-Xaa bonds in small molecule substrates (thus differing from cathepsin L). In addition to being an endopeptidase, shows peptidyl-dipeptidase activity, liberating C-terminal dipeptides.. With respect to regulation, inhibited by leupeptin. Thiol protease which is believed to participate in intracellular degradation and turnover of proteins. Cleaves matrix extracellular phosphoglycoprotein MEPE. Involved in the solubilization of cross-linked TG/thyroglobulin in the thyroid follicle lumen. Has also been implicated in tumor invasion and metastasis. This chain is Cathepsin B (CTSB), found in Homo sapiens (Human).